A 450-amino-acid chain; its full sequence is Signal recognition particle protein (450 aa).

GTP contacts are provided by residues 107–114 (GLQGVGKT), 190–194 (DTAGR), and 248–251 (TKTD).

Belongs to the GTP-binding SRP family. SRP54 subfamily. Part of the signal recognition particle protein translocation system, which is composed of SRP and FtsY. SRP is a ribonucleoprotein composed of Ffh and a 4.5S RNA molecule.

The protein localises to the cytoplasm. The enzyme catalyses GTP + H2O = GDP + phosphate + H(+). In terms of biological role, involved in targeting and insertion of nascent membrane proteins into the cytoplasmic membrane. Binds to the hydrophobic signal sequence of the ribosome-nascent chain (RNC) as it emerges from the ribosomes. The SRP-RNC complex is then targeted to the cytoplasmic membrane where it interacts with the SRP receptor FtsY. Interaction with FtsY leads to the transfer of the RNC complex to the Sec translocase for insertion into the membrane, the hydrolysis of GTP by both Ffh and FtsY, and the dissociation of the SRP-FtsY complex into the individual components. The polypeptide is Signal recognition particle protein (Buchnera aphidicola subsp. Schizaphis graminum (strain Sg)).